The primary structure comprises 184 residues: MSTDKSPYAAFSALLASSGRDRSPAELHGQLLGRSCAGAGFEVDAWLADAADLLGGQIPDNVRQALIGLQEMVKGELTGGEVAVVLLLPSDEAPLAERAAALGQWCQGFLGGFGLAAGDRPLSAEAMEVLQDLAAISQVQSALEDSEEGEGAYMEVMEYLRVAPLLLFTECAGPVAPAPKPSVH.

The protein belongs to the UPF0149 family.

This Azotobacter vinelandii (strain DJ / ATCC BAA-1303) protein is UPF0149 protein Avin_47340.